The sequence spans 256 residues: Thiazole synthase (256 aa).

Catalysis depends on Lys95, which acts as the Schiff-base intermediate with DXP. Residues Gly156, 183–184 (AG), and 205–206 (NT) each bind 1-deoxy-D-xylulose 5-phosphate.

Belongs to the ThiG family. In terms of assembly, homotetramer. Forms heterodimers with either ThiH or ThiS.

It is found in the cytoplasm. The enzyme catalyses [ThiS sulfur-carrier protein]-C-terminal-Gly-aminoethanethioate + 2-iminoacetate + 1-deoxy-D-xylulose 5-phosphate = [ThiS sulfur-carrier protein]-C-terminal Gly-Gly + 2-[(2R,5Z)-2-carboxy-4-methylthiazol-5(2H)-ylidene]ethyl phosphate + 2 H2O + H(+). Its pathway is cofactor biosynthesis; thiamine diphosphate biosynthesis. Its function is as follows. Catalyzes the rearrangement of 1-deoxy-D-xylulose 5-phosphate (DXP) to produce the thiazole phosphate moiety of thiamine. Sulfur is provided by the thiocarboxylate moiety of the carrier protein ThiS. In vitro, sulfur can be provided by H(2)S. This is Thiazole synthase from Gluconacetobacter diazotrophicus (strain ATCC 49037 / DSM 5601 / CCUG 37298 / CIP 103539 / LMG 7603 / PAl5).